The primary structure comprises 140 residues: Small ribosomal subunit protein uS12m (140 aa).

This sequence belongs to the universal ribosomal protein uS12 family.

The protein resides in the mitochondrion. The sequence is that of Small ribosomal subunit protein uS12m (mrps12) from Dictyostelium discoideum (Social amoeba).